Consider the following 165-residue polypeptide: Phosphopantetheine adenylyltransferase (165 aa).

Position 9 (T9) interacts with substrate. ATP-binding positions include 9-10 (TF) and H17. Residues K41, L73, and R87 each coordinate substrate. Residues 88–90 (GLR), E98, and 123–129 (LQPIASR) each bind ATP.

This sequence belongs to the bacterial CoaD family. As to quaternary structure, homohexamer. It depends on Mg(2+) as a cofactor.

It is found in the cytoplasm. The catalysed reaction is (R)-4'-phosphopantetheine + ATP + H(+) = 3'-dephospho-CoA + diphosphate. The protein operates within cofactor biosynthesis; coenzyme A biosynthesis; CoA from (R)-pantothenate: step 4/5. Its function is as follows. Reversibly transfers an adenylyl group from ATP to 4'-phosphopantetheine, yielding dephospho-CoA (dPCoA) and pyrophosphate. This Rhizorhabdus wittichii (strain DSM 6014 / CCUG 31198 / JCM 15750 / NBRC 105917 / EY 4224 / RW1) (Sphingomonas wittichii) protein is Phosphopantetheine adenylyltransferase.